We begin with the raw amino-acid sequence, 155 residues long: uncharacterized protein (155 aa).

Helical transmembrane passes span 2–24 (TFLF…PPIF), 62–84 (AVVN…YLVL), 97–116 (VFLI…FLVV), and 131–148 (VVLL…KVFN).

It localises to the cell membrane. This is an uncharacterized protein from Aquifex aeolicus (strain VF5).